Here is a 317-residue protein sequence, read N- to C-terminus: Lipoyl synthase (317 aa).

[4Fe-4S] cluster contacts are provided by C56, C61, C67, C82, C86, C89, and S298. In terms of domain architecture, Radical SAM core spans 68-287; it reads WEDREATFLI…KEEAEQIGFS (220 aa).

This sequence belongs to the radical SAM superfamily. Lipoyl synthase family. [4Fe-4S] cluster is required as a cofactor.

The protein localises to the cytoplasm. It carries out the reaction [[Fe-S] cluster scaffold protein carrying a second [4Fe-4S](2+) cluster] + N(6)-octanoyl-L-lysyl-[protein] + 2 oxidized [2Fe-2S]-[ferredoxin] + 2 S-adenosyl-L-methionine + 4 H(+) = [[Fe-S] cluster scaffold protein] + N(6)-[(R)-dihydrolipoyl]-L-lysyl-[protein] + 4 Fe(3+) + 2 hydrogen sulfide + 2 5'-deoxyadenosine + 2 L-methionine + 2 reduced [2Fe-2S]-[ferredoxin]. It functions in the pathway protein modification; protein lipoylation via endogenous pathway; protein N(6)-(lipoyl)lysine from octanoyl-[acyl-carrier-protein]: step 2/2. Its function is as follows. Catalyzes the radical-mediated insertion of two sulfur atoms into the C-6 and C-8 positions of the octanoyl moiety bound to the lipoyl domains of lipoate-dependent enzymes, thereby converting the octanoylated domains into lipoylated derivatives. The polypeptide is Lipoyl synthase (Streptomyces coelicolor (strain ATCC BAA-471 / A3(2) / M145)).